Here is a 132-residue protein sequence, read N- to C-terminus: Small ribosomal subunit protein uS9 (132 aa).

This sequence belongs to the universal ribosomal protein uS9 family.

The protein is Small ribosomal subunit protein uS9 of Baumannia cicadellinicola subsp. Homalodisca coagulata.